The following is a 582-amino-acid chain: Beta-glucosidase 28 (582 aa).

The N-terminal stretch at 1–21 (MKMHFFILLVITSWLSEKITS) is a signal peptide. Residues Gln48, His151, and 196 to 197 (NE) each bind a beta-D-glucoside. The active-site Proton donor is the Glu197. An intrachain disulfide couples Cys216 to Cys224. 2 N-linked (GlcNAc...) asparagine glycosylation sites follow: Asn255 and Asn330. Residue Tyr340 coordinates a beta-D-glucoside. Asn370 is a glycosylation site (N-linked (GlcNAc...) asparagine). Glu412 lines the a beta-D-glucoside pocket. Residue Glu412 is the Nucleophile of the active site. Asn430 is a glycosylation site (N-linked (GlcNAc...) asparagine). Residues Trp462, 469 to 470 (EW), and Phe478 contribute to the a beta-D-glucoside site. Residues Asn521 and Asn544 are each glycosylated (N-linked (GlcNAc...) asparagine).

The protein belongs to the glycosyl hydrolase 1 family.

It catalyses the reaction Hydrolysis of terminal, non-reducing beta-D-glucosyl residues with release of beta-D-glucose.. The protein is Beta-glucosidase 28 of Arabidopsis thaliana (Mouse-ear cress).